A 101-amino-acid chain; its full sequence is Long chronological lifespan protein 1 (101 aa).

A signal peptide spans 1-17; that stretch reads MKNAALCEALPLLATCS. Ser81 is lipidated: GPI-anchor amidated serine. Positions 82–101 are cleaved as a propeptide — removed in mature form; it reads FAKPSFSFFFFLLTSLLSPF.

The protein localises to the cell membrane. This Saccharomyces cerevisiae (strain ATCC 204508 / S288c) (Baker's yeast) protein is Long chronological lifespan protein 1 (LCL1).